We begin with the raw amino-acid sequence, 64 residues long: PYLa/PGLa B (64 aa).

The first 20 residues, 1-20, serve as a signal peptide directing secretion; the sequence is MYKQIFLCLIIAALCATIMA. The propeptide occupies 21 to 35; the sequence is EASALADADDDDDKR. The residue at position 59 (Leu-59) is a Leucine amide. Positions 60–64 are excised as a propeptide; that stretch reads GRRDS.

It belongs to the gastrin/cholecystokinin family. Magainin subfamily. In terms of tissue distribution, expressed by the skin glands. Synthesized in the stomach and stored in a novel granular multinucleated cell in the gastric mucosa. Stored as active, processed peptides in large granules within the granular gland secretions of the skin.

It is found in the secreted. In terms of biological role, PGLa and PGLa-H display a broad-spectrum of antibacterial activity against a range of Gram-positive and Gram-negative bacteria. PGLa also displays antifungal activity against C.albicans ATCC 14053. PGLa-H shows moderate antibacterial activity against the multidrug-resistant methicillin-resistant S.aureus (MRSA) but exhibits very little hemolytic activity. This chain is PYLa/PGLa B (pgla-b), found in Xenopus laevis (African clawed frog).